Here is a 230-residue protein sequence, read N- to C-terminus: MVQKKPINRSLRGRFITFEGGEGAGKSTQIRLLAKRLEKARLRTLVTREPGGSPGAEAIRSALLAGIGKLIGGADAEALLFAAARDDHVRTLIEPALARGEWVLCDRFYDSTRAYQGKLGAVSLDLLNALQQVTIGDMKPDLTVILDIPVEIGLARAAVRRGSETPDRFESEAIDFHRGLREVFRQIAAQEPERCALIDANAEPEEVADRIWQAVRLRLLEPARAGAKSA.

An ATP-binding site is contributed by 20–27 (GGEGAGKS).

Belongs to the thymidylate kinase family.

The enzyme catalyses dTMP + ATP = dTDP + ADP. Functionally, phosphorylation of dTMP to form dTDP in both de novo and salvage pathways of dTTP synthesis. The polypeptide is Thymidylate kinase (Rhodopseudomonas palustris (strain TIE-1)).